The following is a 61-amino-acid chain: UPF0434 protein Pput_3813 (61 aa).

This sequence belongs to the UPF0434 family.

The chain is UPF0434 protein Pput_3813 from Pseudomonas putida (strain ATCC 700007 / DSM 6899 / JCM 31910 / BCRC 17059 / LMG 24140 / F1).